The chain runs to 113 residues: Large ribosomal subunit protein P1 (113 aa).

The span at 56-66 shows a compositional bias: low complexity; it reads TAAAAPAPAAG. The tract at residues 56–113 is disordered; sequence TAAAAPAPAAGGSAGGEVEAADDDDEEDAEEEAADEGGDDDGDDDEEADGEGLGALFG. Over residues 74–105 the composition is skewed to acidic residues; sequence EAADDDDEEDAEEEAADEGGDDDGDDDEEADG.

It belongs to the eukaryotic ribosomal protein P1/P2 family. Part of the 50S ribosomal subunit. Homodimer, it forms part of the ribosomal stalk which helps the ribosome interact with GTP-bound translation factors. Forms a heptameric uL10/P0(P1)2(P1)2(P1)2 complex, where uL10/P0 forms an elongated spine to which the P1 dimers bind in a sequential fashion.

Its function is as follows. Forms part of the ribosomal stalk, playing a central role in the interaction of the ribosome with GTP-bound translation factors. The polypeptide is Large ribosomal subunit protein P1 (Haloferax volcanii (strain ATCC 29605 / DSM 3757 / JCM 8879 / NBRC 14742 / NCIMB 2012 / VKM B-1768 / DS2) (Halobacterium volcanii)).